We begin with the raw amino-acid sequence, 478 residues long: Solute carrier family 7 member 13 (478 aa).

The Cytoplasmic portion of the chain corresponds to Met-1–Glu-14. The chain crosses the membrane as a helical span at residues Leu-15–Val-35. Residues Ser-36–Asn-47 are Extracellular-facing. The chain crosses the membrane as a helical span at residues Val-48 to Cys-68. Residues Ser-69–Cys-89 are Cytoplasmic-facing. Residues Phe-90–Ile-110 traverse the membrane as a helical segment. Topologically, residues Ala-111 to Cys-129 are extracellular. Residues Ser-130–Leu-150 traverse the membrane as a helical segment. At Asn-151–Thr-163 the chain is on the cytoplasmic side. The chain crosses the membrane as a helical span at residues Val-164–Leu-184. Residues Val-185–Gln-208 are Extracellular-facing. Residues Leu-209–Ile-229 form a helical membrane-spanning segment. Residues Ala-230 to Arg-242 lie on the Cytoplasmic side of the membrane. Residues Cys-243 to Leu-263 traverse the membrane as a helical segment. Residues Thr-264–Gln-288 are Extracellular-facing. The chain crosses the membrane as a helical span at residues Phe-289–Val-309. Residues Leu-310–Pro-338 lie on the Cytoplasmic side of the membrane. A helical membrane pass occupies residues Phe-339–Ile-359. Position 360 (Asp-360) is a topological domain, extracellular. The chain crosses the membrane as a helical span at residues Leu-361 to Leu-381. Topologically, residues Lys-382–Lys-395 are cytoplasmic. A helical transmembrane segment spans residues Val-396–Leu-416. Over Val-417–His-423 the chain is Extracellular. Residues Tyr-424–Phe-444 traverse the membrane as a helical segment. The Cytoplasmic segment spans residues Lys-445 to Ser-478.

This sequence belongs to the amino acid-polyamine-organocation (APC) superfamily. Disulfide-linked heterodimer composed of the catalytic light subunit SLC7A13 and the heavy subunit SLC3A1. Expressed in renal tubules in the outer stripe of the outer medulla and medullary ray (at protein level). Detected in male but not in female kidney.

Its subcellular location is the apical cell membrane. It catalyses the reaction L-cystine(out) + L-aspartate(in) = L-cystine(in) + L-aspartate(out). It carries out the reaction L-cystine(out) = L-cystine(in). The catalysed reaction is L-aspartate(in) + L-glutamate(out) = L-aspartate(out) + L-glutamate(in). The enzyme catalyses L-aspartate(in) + L-glutamine(out) = L-aspartate(out) + L-glutamine(in). It catalyses the reaction L-aspartate(in) + L-methionine(out) = L-aspartate(out) + L-methionine(in). It carries out the reaction L-leucine(out) + L-aspartate(in) = L-leucine(in) + L-aspartate(out). The catalysed reaction is L-valine(out) + L-aspartate(in) = L-valine(in) + L-aspartate(out). The enzyme catalyses L-aspartate(in) + L-phenylalanine(out) = L-aspartate(out) + L-phenylalanine(in). It catalyses the reaction L-tyrosine(out) + L-aspartate(in) = L-tyrosine(in) + L-aspartate(out). It carries out the reaction L-tryptophan(out) + L-aspartate(in) = L-tryptophan(in) + L-aspartate(out). Functionally, associates with SLC3A1/rBAT to form a functional heterodimeric complex that transports anionic and neutral amino acids across the apical plasma membrane of renal epithelium. Preferentially mediates exchange transport, but can also operate via facilitated diffusion. May act as a major transporter for L-cystine in late proximal tubules, ensuring its reabsorption from the luminal fluid in exchange for cytosolic L-glutamate or L-aspartate. The sequence is that of Solute carrier family 7 member 13 from Mus musculus (Mouse).